The sequence spans 264 residues: [LysW]-aminoadipate/[LysW]-glutamate kinase (264 aa).

Substrate is bound by residues 35 to 36 (GG), Arg-62, and Asn-167.

Belongs to the acetylglutamate kinase family. LysZ subfamily.

It localises to the cytoplasm. The catalysed reaction is [amino-group carrier protein]-C-terminal-N-(1,4-dicarboxybutan-1-yl)-L-glutamine + ATP = [amino-group carrier protein]-C-terminal-N-(1-carboxy-5-phosphooxy-5-oxopentan-1-yl)-L-glutamine + ADP. It catalyses the reaction [amino-group carrier protein]-C-terminal-gamma-(L-glutamyl)-L-glutamate + ATP = [amino-group carrier protein]-C-terminal-gamma-(5-phospho-L-glutamyl)-L-glutamate + ADP. It functions in the pathway amino-acid biosynthesis; L-lysine biosynthesis via AAA pathway; L-lysine from L-alpha-aminoadipate (Thermus route): step 2/5. It participates in amino-acid biosynthesis; L-arginine biosynthesis. Functionally, involved in both the arginine and lysine biosynthetic pathways. Phosphorylates the LysW-bound precursors glutamate (for arginine biosynthesis), respectively alpha-aminoadipate (for lysine biosynthesis). The sequence is that of [LysW]-aminoadipate/[LysW]-glutamate kinase from Saccharolobus islandicus (strain Y.N.15.51 / Yellowstone #2) (Sulfolobus islandicus).